The primary structure comprises 125 residues: Small ribosomal subunit protein uS12 (125 aa).

The tract at residues 9–31 (RQGREVEKIKSKSPAMENSPQRR) is disordered. At aspartate 89 the chain carries 3-methylthioaspartic acid. Residues 105 to 125 (QGVKDRKQSRSKYGAKRPKAK) form a disordered region. The segment covering 113 to 125 (SRSKYGAKRPKAK) has biased composition (basic residues).

This sequence belongs to the universal ribosomal protein uS12 family. As to quaternary structure, part of the 30S ribosomal subunit. Contacts proteins S8 and S17. May interact with IF1 in the 30S initiation complex.

Functionally, with S4 and S5 plays an important role in translational accuracy. Its function is as follows. Interacts with and stabilizes bases of the 16S rRNA that are involved in tRNA selection in the A site and with the mRNA backbone. Located at the interface of the 30S and 50S subunits, it traverses the body of the 30S subunit contacting proteins on the other side and probably holding the rRNA structure together. The combined cluster of proteins S8, S12 and S17 appears to hold together the shoulder and platform of the 30S subunit. This chain is Small ribosomal subunit protein uS12, found in Polaromonas naphthalenivorans (strain CJ2).